The primary structure comprises 425 residues: DNA replication and repair protein RecF (425 aa).

30–37 (GPNGHGKT) is an ATP binding site.

Belongs to the RecF family.

The protein resides in the cytoplasm. The RecF protein is involved in DNA metabolism; it is required for DNA replication and normal SOS inducibility. RecF binds preferentially to single-stranded, linear DNA. It also seems to bind ATP. The protein is DNA replication and repair protein RecF of Corynebacterium jeikeium (strain K411).